A 152-amino-acid polypeptide reads, in one-letter code: Protein IpgF (152 aa).

A signal peptide spans 1–17 (MSRFVFILLCFIPYLGR).

This sequence belongs to the IagB/IpgF/P19 family.

This chain is Protein IpgF (ipgF), found in Shigella sonnei.